A 581-amino-acid chain; its full sequence is MAKQLSFSNESREALEKGVNFVANAVKVTIGPKAKNVVIEKKFGSPDIVRDGSTVAKEIEIENPISNLGAKLIEQVASKTKESAGDGTTTATILTQKMVQEGLKNIASGANPMELKKGMEAGLSFVLEKLSSKSISLSGSDIQKVATVSAGGDEEIGSIISKAMDIVTSDGVITVEESQSLETELDITEGMSFDRGYSSPYFVTDQERQVCELENPKILITDQKISTLVDLVPILEEIQKSGSPFLILAEDIEGEALTTLVLNKNSGVLNVASVRAPLFGERRKAALEDIAILTGAKLISEDKSMTLDKVSINDLGKAKKITITKDKTTIVAFEDTKDLVKGRVEKLKREVNITESEYDQDKINERIAKLAGGVALIKVGAATETEMKYKKLRIEDSLNATKAAIEEGVVSGGGQTLIEISDDLLNLSKTSTDDLRTGINIVKEALLEPTKQIAKNAGFNGDVVVAEIKRLNKGFNANSGKYEDLKDSGILDPTKVIRLALQDSVSIAAMLLTTEVAMADIPEPEAAGPGGPGADPMGGMGGMGMPGMGGMGMPGMGGMGMPGMGGMGMPGMGGMGMPGMM.

Residues 29 to 32 (TIGP), 86 to 90 (DGTTT), G413, and D492 each bind ATP. The tract at residues 522–541 (PEPEAAGPGGPGADPMGGMG) is disordered. The span at 528–541 (GPGGPGADPMGGMG) shows a compositional bias: gly residues.

The protein belongs to the chaperonin (HSP60) family. Forms a cylinder of 14 subunits composed of two heptameric rings stacked back-to-back. Interacts with the co-chaperonin GroES.

Its subcellular location is the cytoplasm. The enzyme catalyses ATP + H2O + a folded polypeptide = ADP + phosphate + an unfolded polypeptide.. Functionally, together with its co-chaperonin GroES, plays an essential role in assisting protein folding. The GroEL-GroES system forms a nano-cage that allows encapsulation of the non-native substrate proteins and provides a physical environment optimized to promote and accelerate protein folding. This Prochlorococcus marinus (strain MIT 9301) protein is Chaperonin GroEL 1.